The sequence spans 91 residues: Islet amyloid polypeptide (91 aa).

The signal sequence occupies residues 1–22; the sequence is MCLLQLPVVLLLLSAALNTLKA. A propeptide spanning residues 23-34 is cleaved from the precursor; the sequence is TPIASDTDHRVD. C38 and C43 are disulfide-bonded. Position 73 is a tyrosine amide (Y73). A propeptide spanning residues 77 to 91 is cleaved from the precursor; the sequence is NAEVVDVELLHYLPL.

It belongs to the calcitonin family. In terms of assembly, can form homodimers. Interacts with IDE and INS. Interaction with INS inhibits homodimerization and fibril formation.

The protein resides in the secreted. Amylin/IAPP is a glucoregulatory peptide hormone that plays an important role in the regulation of energy homeostasis. Selectively inhibits insulin-stimulated glucose utilization and glycogen deposition in muscle, while not affecting adipocyte glucose metabolism. IAPP function is mediated by the CALCR-RAMPs (AMYRs) receptor complexes. Amylin can also bind CALCR receptor in the absence of RAMPs, although it is more selective for AMYRs. In Octodon degus (Degu), this protein is Islet amyloid polypeptide (IAPP).